Consider the following 561-residue polypeptide: MELETSVYRPNVAVYDSPDGVEVRGRYDQVFAKILTRDALGFVAELQREFRGHVRYAMECRREVKRRYNSGAVPGFDPSTKFIRDGEWVCASVPPAVADRRVEITGPVERKMIINALNSGAKVFMADFEDALSPSWENLMRGQVNLKDAVDGSITFNDKARNKVYKLNDQVAKLFVRPRGWHLPEAHILIDGEPATGCLVDFGLYFFHNYAKFRQTQGSGFGPFFYLPKMEHSREAKIWNSVFERAEKMAGIERGSIRATVLIETLPAVFQMNEILYELRDHSVGLNCGRWDYIFSYVKTFQAHPDRLLPDRVLVGMGQHFMRSYSDLLIRTCHKRGVHAMGGMAAQIPIRDDPKANEMALDLVKKDKLREVRAGHDGTWAAHPGLIPICMDAFSHMGNNPNQIKSMKRDDASAITEEDLLQIPRGVRTLEGLRLNTRVGIQYLAAWLTGSGSVPLYNLMEDAATAEISRVQNWQWIRYGVELDGDGLGVRVSKELFGRVVEEEMERIEKEVGKDKFKRGMYKEACKMFTKQCTAAELDDFLTLAVYDHIVAHYPINASRL.

The active-site Proton acceptor is R177. D462 acts as the Proton donor in catalysis. Positions 559 to 561 match the Microbody targeting signal motif; it reads SRL.

This sequence belongs to the malate synthase family.

The protein localises to the glyoxysome. The catalysed reaction is glyoxylate + acetyl-CoA + H2O = (S)-malate + CoA + H(+). It functions in the pathway carbohydrate metabolism; glyoxylate cycle; (S)-malate from isocitrate: step 2/2. The polypeptide is Malate synthase, glyoxysomal (Brassica napus (Rape)).